A 425-amino-acid chain; its full sequence is Transmembrane protein 184A (425 aa).

The next 7 helical transmembrane spans lie at 51 to 71 (LFLT…TALL), 96 to 116 (LLFI…LLGG), 133 to 153 (FVIY…SAIM), 189 to 209 (TLQF…LQAF), 226 to 246 (VTLV…LFYF), 261 to 281 (FLTI…LAIL), and 303 to 323 (LAAG…SLAL). The interval 375–425 (QYTQQSTHEAPGPGQGGHPAPSTHPGPASGSGGGKKSRNIEKRMLIPSEDL) is disordered. Low complexity predominate over residues 392 to 402 (HPAPSTHPGPA).

This sequence belongs to the TMEM184 family. As to expression, expressed in testis, pancreas, parotid salivary gland and mammary gland (at protein level).

Its subcellular location is the cell membrane. The protein resides in the cytoplasm. It is found in the perinuclear region. It localises to the cytoplasmic vesicle membrane. The protein localises to the early endosome membrane. Its subcellular location is the endosome. The protein resides in the cytoplasmic vesicle. It is found in the secretory vesicle membrane. In terms of biological role, acts as a heparin receptor in vascular cells. May be involved in vesicle transport in exocrine cells and Sertoli cells. The chain is Transmembrane protein 184A (Tmem184a) from Mus musculus (Mouse).